The following is a 217-amino-acid chain: Adenylate kinase (217 aa).

10 to 15 (GAGKGT) contributes to the ATP binding site. The tract at residues 30–59 (STGDIFRSNVSQGTPLGVQAKRYMDAGELV) is NMP. AMP is bound by residues Thr-31, Arg-36, 57 to 59 (ELV), 85 to 88 (GFPR), and Gln-92. The tract at residues 126–163 (GRRTCRGCGKVWHVEFDAPSQEGRCDRCGAELFQRDDD) is LID. Arg-127 contacts ATP. The Zn(2+) site is built by Cys-130, Cys-133, Cys-150, and Cys-153. AMP-binding residues include Arg-160 and Arg-171. Position 199 (Gly-199) interacts with ATP.

This sequence belongs to the adenylate kinase family. In terms of assembly, monomer.

The protein localises to the cytoplasm. It carries out the reaction AMP + ATP = 2 ADP. Its pathway is purine metabolism; AMP biosynthesis via salvage pathway; AMP from ADP: step 1/1. In terms of biological role, catalyzes the reversible transfer of the terminal phosphate group between ATP and AMP. Plays an important role in cellular energy homeostasis and in adenine nucleotide metabolism. The chain is Adenylate kinase from Salinispora tropica (strain ATCC BAA-916 / DSM 44818 / JCM 13857 / NBRC 105044 / CNB-440).